The following is a 333-amino-acid chain: tRNA N6-adenosine threonylcarbamoyltransferase (333 aa).

Residues histidine 111 and histidine 115 each coordinate Fe cation. Substrate-binding positions include 134–138, aspartate 167, glycine 180, and asparagine 272; that span reads LVSGG. Residue aspartate 300 coordinates Fe cation.

Belongs to the KAE1 / TsaD family. Fe(2+) is required as a cofactor.

The protein localises to the cytoplasm. It catalyses the reaction L-threonylcarbamoyladenylate + adenosine(37) in tRNA = N(6)-L-threonylcarbamoyladenosine(37) in tRNA + AMP + H(+). Its function is as follows. Required for the formation of a threonylcarbamoyl group on adenosine at position 37 (t(6)A37) in tRNAs that read codons beginning with adenine. Is involved in the transfer of the threonylcarbamoyl moiety of threonylcarbamoyl-AMP (TC-AMP) to the N6 group of A37, together with TsaE and TsaB. TsaD likely plays a direct catalytic role in this reaction. In Legionella pneumophila (strain Paris), this protein is tRNA N6-adenosine threonylcarbamoyltransferase.